We begin with the raw amino-acid sequence, 159 residues long: Ribosomal RNA large subunit methyltransferase H (159 aa).

S-adenosyl-L-methionine contacts are provided by residues L76, G108, and F127 to L132.

This sequence belongs to the RNA methyltransferase RlmH family. In terms of assembly, homodimer.

Its subcellular location is the cytoplasm. The enzyme catalyses pseudouridine(1915) in 23S rRNA + S-adenosyl-L-methionine = N(3)-methylpseudouridine(1915) in 23S rRNA + S-adenosyl-L-homocysteine + H(+). Specifically methylates the pseudouridine at position 1915 (m3Psi1915) in 23S rRNA. This is Ribosomal RNA large subunit methyltransferase H from Streptococcus pneumoniae (strain 70585).